A 215-amino-acid chain; its full sequence is Large ribosomal subunit protein uL4 (215 aa).

The disordered stretch occupies residues T46–R72. The span at S56–A71 shows a compositional bias: gly residues.

It belongs to the universal ribosomal protein uL4 family. Part of the 50S ribosomal subunit.

In terms of biological role, one of the primary rRNA binding proteins, this protein initially binds near the 5'-end of the 23S rRNA. It is important during the early stages of 50S assembly. It makes multiple contacts with different domains of the 23S rRNA in the assembled 50S subunit and ribosome. Its function is as follows. Forms part of the polypeptide exit tunnel. This Helicobacter pylori (strain J99 / ATCC 700824) (Campylobacter pylori J99) protein is Large ribosomal subunit protein uL4.